The chain runs to 349 residues: Phosphoribosylformylglycinamidine cyclo-ligase (349 aa).

Belongs to the AIR synthase family.

It localises to the cytoplasm. The enzyme catalyses 2-formamido-N(1)-(5-O-phospho-beta-D-ribosyl)acetamidine + ATP = 5-amino-1-(5-phospho-beta-D-ribosyl)imidazole + ADP + phosphate + H(+). Its pathway is purine metabolism; IMP biosynthesis via de novo pathway; 5-amino-1-(5-phospho-D-ribosyl)imidazole from N(2)-formyl-N(1)-(5-phospho-D-ribosyl)glycinamide: step 2/2. The sequence is that of Phosphoribosylformylglycinamidine cyclo-ligase from Psychrobacter arcticus (strain DSM 17307 / VKM B-2377 / 273-4).